The following is a 381-amino-acid chain: RING-H2 finger protein ATL1 (381 aa).

A disordered region spans residues 1–31 (MDLTDRRNPFNNLVFPPPPPPPSTTFTSPIF). Residues 46 to 66 (IAVIGILATAFLLVSYYIFVI) traverse the membrane as a helical segment. An RING-type; atypical zinc finger spans residues 134 to 176 (CSVCLNEFQEDEKLRIIPNCCHVFHIDCIDIWLQGNANCPLCR). Disordered stretches follow at residues 249–269 (TSNEVSTGNSPKSVSPLPIKF) and 334–354 (RQIPVAGDGEDSSSSGGGNSR). Residues 250–261 (SNEVSTGNSPKS) are compositionally biased toward polar residues.

This sequence belongs to the RING-type zinc finger family. ATL subfamily.

The protein resides in the membrane. It carries out the reaction S-ubiquitinyl-[E2 ubiquitin-conjugating enzyme]-L-cysteine + [acceptor protein]-L-lysine = [E2 ubiquitin-conjugating enzyme]-L-cysteine + N(6)-ubiquitinyl-[acceptor protein]-L-lysine.. It participates in protein modification; protein ubiquitination. The sequence is that of RING-H2 finger protein ATL1 (ATL1) from Arabidopsis thaliana (Mouse-ear cress).